Reading from the N-terminus, the 373-residue chain is Melanoma-associated antigen C2 (373 aa).

Positions 1-102 (MPPVPGVPFR…QGPSQSPLSS (102 aa)) are disordered. Positions 40–60 (SSASSTLYLVFSPSSFSTSSS) are enriched in low complexity. Positions 85–94 (SSPPQGPPQG) are enriched in pro residues. Positions 135-373 (SSFTYTLDEK…VMSSNVSFSE (239 aa)) are interaction with TRIM28. The MAGE domain occupies 141-336 (LDEKVAELVE…SSFPSWYKDA (196 aa)).

As to quaternary structure, interacts with TRIM28 and UBE2H. In terms of tissue distribution, not expressed in normal tissues, except in germ cells in the seminiferous tubules and in Purkinje cells of the cerebellum. Expressed in various tumors, including melanoma, lymphoma, as well as pancreatic cancer, mammary gland cancer, non-small cell lung cancer and liver cancer. In hepatocellular carcinoma, there is an inverse correlation between tumor differentiation and protein expression, i.e. the lower the differentiation, the higher percentage of expression.

The protein resides in the cytoplasm. The protein localises to the nucleus. Functionally, proposed to enhance ubiquitin ligase activity of RING-type zinc finger-containing E3 ubiquitin-protein ligases. In vitro enhances ubiquitin ligase activity of TRIM28 and stimulates p53/TP53 ubiquitination in presence of Ubl-conjugating enzyme UBE2H leading to p53/TP53 degradation. Proposed to act through recruitment and/or stabilization of the Ubl-conjugating enzymes (E2) at the E3:substrate complex. The sequence is that of Melanoma-associated antigen C2 (MAGEC2) from Homo sapiens (Human).